Reading from the N-terminus, the 544-residue chain is Probable protein kinase UbiB (544 aa).

The region spanning 123 to 501 (EFDIKPLASA…KRQQATGKFL (379 aa)) is the Protein kinase domain. Residues 129–137 (LASASIAQV) and lysine 152 contribute to the ATP site. Residue aspartate 287 is the Proton acceptor of the active site. The next 2 helical transmembrane spans lie at 496 to 516 (ATGK…AILV) and 519 to 539 (AYEQ…LLSW).

The protein belongs to the ABC1 family. UbiB subfamily.

The protein resides in the cell inner membrane. Its pathway is cofactor biosynthesis; ubiquinone biosynthesis [regulation]. In terms of biological role, is probably a protein kinase regulator of UbiI activity which is involved in aerobic coenzyme Q (ubiquinone) biosynthesis. The protein is Probable protein kinase UbiB of Vibrio campbellii (strain ATCC BAA-1116).